The chain runs to 692 residues: Protein hook (692 aa).

The region spanning Ser-6 to Ala-123 is the Calponin-homology (CH) domain. Positions Glu-135–Thr-576 form a coiled coil. The segment at Ala-161 to Val-180 is disordered.

Belongs to the hook family. As to quaternary structure, homodimer. Interacts with microtubules via its N-terminus.

Its subcellular location is the cytoplasm. It localises to the cytoskeleton. The protein localises to the endosome. It is found in the synapse. Functionally, involved in endocytic trafficking by stabilizing organelles of the endocytic pathway. Probably acts as a cytoskeletal linker protein required to tether endosome vesicles to the cytoskeleton. Involved in modulation of endocytosis at stages required for down-regulation of membrane proteins that control synapse size. Not involved in synaptic vesicle recycling. Required in R7 cells for boss endocytosis into multivesicular bodies (MVBs). Has a role in regulating adult longevity. The sequence is that of Protein hook from Drosophila willistoni (Fruit fly).